Consider the following 613-residue polypeptide: Dihydroxy-acid dehydratase (613 aa).

Asp81 serves as a coordination point for Mg(2+). Cys122 serves as a coordination point for [2Fe-2S] cluster. Mg(2+) is bound by residues Asp123 and Lys124. Lys124 carries the N6-carboxylysine modification. Residue Cys195 coordinates [2Fe-2S] cluster. Residue Glu491 coordinates Mg(2+). Ser517 acts as the Proton acceptor in catalysis.

It belongs to the IlvD/Edd family. As to quaternary structure, homodimer. [2Fe-2S] cluster serves as cofactor. It depends on Mg(2+) as a cofactor.

The enzyme catalyses (2R)-2,3-dihydroxy-3-methylbutanoate = 3-methyl-2-oxobutanoate + H2O. The catalysed reaction is (2R,3R)-2,3-dihydroxy-3-methylpentanoate = (S)-3-methyl-2-oxopentanoate + H2O. It participates in amino-acid biosynthesis; L-isoleucine biosynthesis; L-isoleucine from 2-oxobutanoate: step 3/4. It functions in the pathway amino-acid biosynthesis; L-valine biosynthesis; L-valine from pyruvate: step 3/4. Functions in the biosynthesis of branched-chain amino acids. Catalyzes the dehydration of (2R,3R)-2,3-dihydroxy-3-methylpentanoate (2,3-dihydroxy-3-methylvalerate) into 2-oxo-3-methylpentanoate (2-oxo-3-methylvalerate) and of (2R)-2,3-dihydroxy-3-methylbutanoate (2,3-dihydroxyisovalerate) into 2-oxo-3-methylbutanoate (2-oxoisovalerate), the penultimate precursor to L-isoleucine and L-valine, respectively. This chain is Dihydroxy-acid dehydratase, found in Hyphomonas neptunium (strain ATCC 15444).